The following is a 192-amino-acid chain: Fe/S biogenesis protein NfuA (192 aa).

[4Fe-4S] cluster contacts are provided by Cys149 and Cys152.

This sequence belongs to the NfuA family. In terms of assembly, homodimer. It depends on [4Fe-4S] cluster as a cofactor.

In terms of biological role, involved in iron-sulfur cluster biogenesis. Binds a 4Fe-4S cluster, can transfer this cluster to apoproteins, and thereby intervenes in the maturation of Fe/S proteins. Could also act as a scaffold/chaperone for damaged Fe/S proteins. The chain is Fe/S biogenesis protein NfuA from Shewanella halifaxensis (strain HAW-EB4).